A 159-amino-acid polypeptide reads, in one-letter code: 2-C-methyl-D-erythritol 2,4-cyclodiphosphate synthase (159 aa).

Positions 10 and 12 each coordinate a divalent metal cation. 4-CDP-2-C-methyl-D-erythritol 2-phosphate contacts are provided by residues 10–12 (DVH) and 36–37 (HS). His-44 is an a divalent metal cation binding site. 4-CDP-2-C-methyl-D-erythritol 2-phosphate is bound by residues 58-60 (DIG), 63-67 (FPDTD), 102-108 (AQAPKMA), 134-137 (TTTE), Phe-141, and Arg-144.

Belongs to the IspF family. Homotrimer. The cofactor is a divalent metal cation.

The enzyme catalyses 4-CDP-2-C-methyl-D-erythritol 2-phosphate = 2-C-methyl-D-erythritol 2,4-cyclic diphosphate + CMP. Its pathway is isoprenoid biosynthesis; isopentenyl diphosphate biosynthesis via DXP pathway; isopentenyl diphosphate from 1-deoxy-D-xylulose 5-phosphate: step 4/6. Functionally, involved in the biosynthesis of isopentenyl diphosphate (IPP) and dimethylallyl diphosphate (DMAPP), two major building blocks of isoprenoid compounds. Catalyzes the conversion of 4-diphosphocytidyl-2-C-methyl-D-erythritol 2-phosphate (CDP-ME2P) to 2-C-methyl-D-erythritol 2,4-cyclodiphosphate (ME-CPP) with a corresponding release of cytidine 5-monophosphate (CMP). This chain is 2-C-methyl-D-erythritol 2,4-cyclodiphosphate synthase, found in Shewanella frigidimarina (strain NCIMB 400).